The primary structure comprises 460 residues: tRNA modification GTPase MnmE (460 aa).

(6S)-5-formyl-5,6,7,8-tetrahydrofolate is bound by residues arginine 29, glutamate 91, and arginine 131. The region spanning glycine 226–glycine 383 is the TrmE-type G domain. Asparagine 236 serves as a coordination point for K(+). Residues asparagine 236 to serine 241, threonine 255 to threonine 261, and aspartate 280 to glycine 283 contribute to the GTP site. Serine 240 lines the Mg(2+) pocket. Positions 255, 257, and 260 each coordinate K(+). Mg(2+) is bound at residue threonine 261. Lysine 460 serves as a coordination point for (6S)-5-formyl-5,6,7,8-tetrahydrofolate.

Belongs to the TRAFAC class TrmE-Era-EngA-EngB-Septin-like GTPase superfamily. TrmE GTPase family. In terms of assembly, homodimer. Heterotetramer of two MnmE and two MnmG subunits. It depends on K(+) as a cofactor.

Its subcellular location is the cytoplasm. Its function is as follows. Exhibits a very high intrinsic GTPase hydrolysis rate. Involved in the addition of a carboxymethylaminomethyl (cmnm) group at the wobble position (U34) of certain tRNAs, forming tRNA-cmnm(5)s(2)U34. This is tRNA modification GTPase MnmE from Synechococcus sp. (strain WH7803).